A 297-amino-acid chain; its full sequence is N-acetylmuramic acid 6-phosphate etherase (297 aa).

The region spanning 55 to 218 (AAAALTRGGR…STGAMVKCGK (164 aa)) is the SIS domain. The active-site Proton donor is the glutamate 83. Residue glutamate 114 is part of the active site.

This sequence belongs to the GCKR-like family. MurNAc-6-P etherase subfamily. Homodimer.

It catalyses the reaction N-acetyl-D-muramate 6-phosphate + H2O = N-acetyl-D-glucosamine 6-phosphate + (R)-lactate. Its pathway is amino-sugar metabolism; 1,6-anhydro-N-acetylmuramate degradation. The protein operates within amino-sugar metabolism; N-acetylmuramate degradation. It participates in cell wall biogenesis; peptidoglycan recycling. Its function is as follows. Specifically catalyzes the cleavage of the D-lactyl ether substituent of MurNAc 6-phosphate, producing GlcNAc 6-phosphate and D-lactate. Together with AnmK, is also required for the utilization of anhydro-N-acetylmuramic acid (anhMurNAc) either imported from the medium or derived from its own cell wall murein, and thus plays a role in cell wall recycling. This chain is N-acetylmuramic acid 6-phosphate etherase, found in Cronobacter sakazakii (strain ATCC BAA-894) (Enterobacter sakazakii).